Consider the following 114-residue polypeptide: Holo-[acyl-carrier-protein] synthase (114 aa).

The Mg(2+) site is built by Asp5 and Glu50.

This sequence belongs to the P-Pant transferase superfamily. AcpS family. Mg(2+) is required as a cofactor.

It is found in the cytoplasm. It catalyses the reaction apo-[ACP] + CoA = holo-[ACP] + adenosine 3',5'-bisphosphate + H(+). Functionally, transfers the 4'-phosphopantetheine moiety from coenzyme A to a Ser of acyl-carrier-protein. The protein is Holo-[acyl-carrier-protein] synthase of Campylobacter curvus (strain 525.92).